We begin with the raw amino-acid sequence, 107 residues long: Cytochrome c2 (107 aa).

The heme c site is built by C14, C17, H18, and M80.

It belongs to the cytochrome c family. Post-translationally, binds 1 heme c group covalently per subunit.

Its function is as follows. Cytochrome c2 is found mainly in purple, non-sulfur, photosynthetic bacteria where it functions as the electron donor to the oxidized bacteriochlorophyll in the photophosphorylation pathway. However, it may also have a role in the respiratory chain and is found in some non-photosynthetic bacteria. This Rhodoblastus acidophilus (Rhodopseudomonas acidophila) protein is Cytochrome c2.